Reading from the N-terminus, the 336-residue chain is Tyrosine recombinase XerC (336 aa).

Positions 14-106 (VARCRWLEPF…SVKSFYRFLL (93 aa)) constitute a Core-binding (CB) domain. Positions 127–330 (KVPRFVSEEE…TFSRLKEIYD (204 aa)) constitute a Tyr recombinase domain. Catalysis depends on residues Arg-183, Lys-207, His-282, Arg-285, and His-308. The active-site O-(3'-phospho-DNA)-tyrosine intermediate is Tyr-317.

This sequence belongs to the 'phage' integrase family. XerC subfamily. Forms a cyclic heterotetrameric complex composed of two molecules of XerC and two molecules of XerD.

The protein localises to the cytoplasm. Its function is as follows. Site-specific tyrosine recombinase, which acts by catalyzing the cutting and rejoining of the recombining DNA molecules. The XerC-XerD complex is essential to convert dimers of the bacterial chromosome into monomers to permit their segregation at cell division. It also contributes to the segregational stability of plasmids. This is Tyrosine recombinase XerC from Chlorobaculum parvum (strain DSM 263 / NCIMB 8327) (Chlorobium vibrioforme subsp. thiosulfatophilum).